Here is a 629-residue protein sequence, read N- to C-terminus: DNA-directed RNA polymerase subunit beta' (629 aa).

Residues C70, C72, C85, and C88 each coordinate Zn(2+). Mg(2+)-binding residues include D472, D474, and D476.

This sequence belongs to the RNA polymerase beta' chain family. RpoC1 subfamily. As to quaternary structure, in plastids the minimal PEP RNA polymerase catalytic core is composed of four subunits: alpha, beta, beta', and beta''. When a (nuclear-encoded) sigma factor is associated with the core the holoenzyme is formed, which can initiate transcription. Mg(2+) is required as a cofactor. Requires Zn(2+) as cofactor.

The protein localises to the plastid. Its subcellular location is the chloroplast. It carries out the reaction RNA(n) + a ribonucleoside 5'-triphosphate = RNA(n+1) + diphosphate. Functionally, DNA-dependent RNA polymerase catalyzes the transcription of DNA into RNA using the four ribonucleoside triphosphates as substrates. This chain is DNA-directed RNA polymerase subunit beta', found in Pyropia yezoensis (Susabi-nori).